Here is a 252-residue protein sequence, read N- to C-terminus: Isoprenyl transferase (252 aa).

The active site involves Asp32. Residue Asp32 coordinates Mg(2+). Substrate contacts are provided by residues 33 to 36 (GNGR), Trp37, Arg45, His49, and 77 to 79 (STE). Asn80 functions as the Proton acceptor in the catalytic mechanism. Substrate-binding positions include Trp81, Arg83, Arg200, and 206 to 208 (RLS). Glu219 lines the Mg(2+) pocket.

The protein belongs to the UPP synthase family. Homodimer. Requires Mg(2+) as cofactor.

In terms of biological role, catalyzes the condensation of isopentenyl diphosphate (IPP) with allylic pyrophosphates generating different type of terpenoids. This is Isoprenyl transferase from Listeria monocytogenes serotype 4b (strain F2365).